A 329-amino-acid chain; its full sequence is Sex comb on midleg-like protein 1 (329 aa).

Phosphoserine is present on residues Ser138 and Ser238. A disordered region spans residues 138 to 157 (SPTLPVSRRENNSPSNLPRP). The SAM domain occupies 258–325 (WSVEAVVLFL…YYIDRLKQGK (68 aa)).

The protein belongs to the SCM family.

Its subcellular location is the nucleus. Putative Polycomb group (PcG) protein. PcG proteins act by forming multiprotein complexes, which are required to maintain the transcriptionally repressive state of homeotic genes throughout development. May be involved in spermatogenesis during sexual maturation. The protein is Sex comb on midleg-like protein 1 (SCML1) of Gorilla gorilla gorilla (Western lowland gorilla).